Consider the following 428-residue polypeptide: Histidinol dehydrogenase (428 aa).

3 residues coordinate NAD(+): Y126, Q188, and N211. 3 residues coordinate substrate: S234, Q256, and H259. The Zn(2+) site is built by Q256 and H259. Active-site proton acceptor residues include E324 and H325. Substrate is bound by residues H325, D358, E412, and H417. Zn(2+) is bound at residue D358. H417 is a binding site for Zn(2+).

The protein belongs to the histidinol dehydrogenase family. It depends on Zn(2+) as a cofactor.

It carries out the reaction L-histidinol + 2 NAD(+) + H2O = L-histidine + 2 NADH + 3 H(+). It participates in amino-acid biosynthesis; L-histidine biosynthesis; L-histidine from 5-phospho-alpha-D-ribose 1-diphosphate: step 9/9. Functionally, catalyzes the sequential NAD-dependent oxidations of L-histidinol to L-histidinaldehyde and then to L-histidine. This Chlorobaculum tepidum (strain ATCC 49652 / DSM 12025 / NBRC 103806 / TLS) (Chlorobium tepidum) protein is Histidinol dehydrogenase.